A 383-amino-acid polypeptide reads, in one-letter code: Lipid-A-disaccharide synthase (383 aa).

Belongs to the LpxB family.

The catalysed reaction is a lipid X + a UDP-2-N,3-O-bis[(3R)-3-hydroxyacyl]-alpha-D-glucosamine = a lipid A disaccharide + UDP + H(+). It participates in bacterial outer membrane biogenesis; LPS lipid A biosynthesis. Functionally, condensation of UDP-2,3-diacylglucosamine and 2,3-diacylglucosamine-1-phosphate to form lipid A disaccharide, a precursor of lipid A, a phosphorylated glycolipid that anchors the lipopolysaccharide to the outer membrane of the cell. The polypeptide is Lipid-A-disaccharide synthase (Anaeromyxobacter sp. (strain K)).